The sequence spans 263 residues: Interleukin-15 receptor subunit alpha (263 aa).

Residues 1–32 (MASPQLRGYGVQAIPVLLLLLLLLLLPLRVTP) form the signal peptide. Over 33–205 (GTTCPPPVSI…ISPHSSKMTK (173 aa)) the chain is Extracellular. The Sushi domain occupies 34–98 (TTCPPPVSIE…WTTPSLKCIR (65 aa)). 2 disulfides stabilise this stretch: Cys36–Cys78 and Cys62–Cys96. Residue Asn51 is glycosylated (N-linked (GlcNAc...) asparagine). The span at 113 to 135 (TPKVTSQPESPSPSAKEPEAFSP) shows a compositional bias: low complexity. Residues 113 to 178 (TPKVTSQPES…HKSSRAPSLA (66 aa)) form a disordered region. Over residues 136 to 145 (KSDTAMTTET) the composition is skewed to polar residues. A compositionally biased stretch (low complexity) spans 154–169 (TPSQTTSAGTTGTGSH). The helical transmembrane segment at 206 to 226 (VAISTSVLLVGAGVVMAFLAW) threads the bilayer. Over 227–263 (YIKSRQPSQPCRVEVETMETVPMTVRASSKEDEDTGA) the chain is Cytoplasmic.

In terms of assembly, the interleukin-15 receptor IL15R is a heterotrimer of IL15RA, IL2RB and IL2RG. IL15RA also self-associates. Interacts with SYK. In terms of processing, N-glycosylated and O-glycosylated. A soluble form (sIL-15RA) arises from proteolytic shedding of the membrane-anchored receptor. It also binds IL15 and thus interferes with IL15 binding to the membrane receptor. In terms of tissue distribution, widely expressed.

It localises to the membrane. The protein resides in the nucleus membrane. Its subcellular location is the cell surface. It is found in the secreted. The protein localises to the extracellular space. In terms of biological role, high-affinity receptor for interleukin-15. Can signal both in cis and trans where IL15R from one subset of cells presents IL15 to neighboring IL2RG-expressing cells. In neutrophils, binds and activates kinase SYK in response to IL15 stimulation. In neutrophils, required for IL15-induced phagocytosis in a SYK-dependent manner. The polypeptide is Interleukin-15 receptor subunit alpha (Il15ra) (Mus musculus (Mouse)).